We begin with the raw amino-acid sequence, 81 residues long: Large ribosomal subunit protein bL31B (81 aa).

Belongs to the bacterial ribosomal protein bL31 family. Type B subfamily. In terms of assembly, part of the 50S ribosomal subunit.

This Borrelia garinii subsp. bavariensis (strain ATCC BAA-2496 / DSM 23469 / PBi) (Borreliella bavariensis) protein is Large ribosomal subunit protein bL31B.